The sequence spans 217 residues: 3-isopropylmalate dehydratase small subunit (217 aa).

It belongs to the LeuD family. LeuD type 1 subfamily. Heterodimer of LeuC and LeuD.

It carries out the reaction (2R,3S)-3-isopropylmalate = (2S)-2-isopropylmalate. It participates in amino-acid biosynthesis; L-leucine biosynthesis; L-leucine from 3-methyl-2-oxobutanoate: step 2/4. Catalyzes the isomerization between 2-isopropylmalate and 3-isopropylmalate, via the formation of 2-isopropylmaleate. The chain is 3-isopropylmalate dehydratase small subunit from Paracidovorax citrulli (strain AAC00-1) (Acidovorax citrulli).